The chain runs to 441 residues: Transforming protein p54/c-ets-1 (441 aa).

Residues 51–136 (ATFSGFAKEQ…EHLEILQKEE (86 aa)) form the PNT domain. The activation domain; required for transcription activation stretch occupies residues 130–243 (EILQKEEAKP…DNMCMGRASR (114 aa)). Positions 304 to 312 (FKDYVRDRA) are helix HI-1. The tract at residues 323–330 (AAALAGYT) is helix HI-2. Positions 335–415 (IQLWQFLLEL…AGKRYVYRFV (81 aa)) form a DNA-binding region, ETS. Residues 418–422 (LQSLL) form a helix H4 region. Residues 426 to 432 (PEELHAM) form a helix H5 region.

Belongs to the ETS family. Binds DNA as a homodimer; homodimerization is required for transcription activation.

Its subcellular location is the nucleus. The protein localises to the cytoplasm. With respect to regulation, autoinhibited by a module composed of four alpha helices (HI-1, HI-2, H4, and H5) that flank the DNA-binding ETS domain, reducing the affinity for DNA. Its function is as follows. Transcription factor. Directly controls the expression of cytokine and chemokine genes in a wide variety of different cellular contexts. This chain is Transforming protein p54/c-ets-1 (ETS1), found in Gallus gallus (Chicken).